Reading from the N-terminus, the 118-residue chain is NADH-ubiquinone oxidoreductase chain 3 (118 aa).

Transmembrane regions (helical) follow at residues 9-29 (IYLV…FLFA), 62-82 (LVSI…PWAV), and 87-107 (IDLF…IGFL).

It belongs to the complex I subunit 3 family.

The protein localises to the mitochondrion membrane. It catalyses the reaction a ubiquinone + NADH + 5 H(+)(in) = a ubiquinol + NAD(+) + 4 H(+)(out). Functionally, core subunit of the mitochondrial membrane respiratory chain NADH dehydrogenase (Complex I) that is believed to belong to the minimal assembly required for catalysis. Complex I functions in the transfer of electrons from NADH to the respiratory chain. The immediate electron acceptor for the enzyme is believed to be ubiquinone. In Pinus sylvestris (Scotch pine), this protein is NADH-ubiquinone oxidoreductase chain 3 (NAD3).